We begin with the raw amino-acid sequence, 344 residues long: AA9 family lytic polysaccharide monooxygenase J (344 aa).

The first 20 residues, 1-20 (MKSSLLVVLTAGLAVRDAIA), serve as a signal peptide directing secretion. The Cu(2+) site is built by His-21 and His-99. A disulfide bridge links Cys-58 with Cys-194. The O2 site is built by His-180 and Gln-189. Tyr-191 contributes to the Cu(2+) binding site. Residues 272–301 (PGGKPASGGSDGNAPEVAEPSGGEGSPSAP) form a disordered region. The span at 285 to 301 (APEVAEPSGGEGSPSAP) shows a compositional bias: low complexity. In terms of domain architecture, CBM1 spans 304-341 (CEVAAYGQCGGDQYSGCTQCASGYTCKAVSPPYYSQCA).

This sequence belongs to the polysaccharide monooxygenase AA9 family. Requires Cu(2+) as cofactor.

It localises to the secreted. The enzyme catalyses [(1-&gt;4)-beta-D-glucosyl]n+m + reduced acceptor + O2 = 4-dehydro-beta-D-glucosyl-[(1-&gt;4)-beta-D-glucosyl]n-1 + [(1-&gt;4)-beta-D-glucosyl]m + acceptor + H2O.. Lytic polysaccharide monooxygenase (LPMO) that depolymerizes crystalline and amorphous polysaccharides via the oxidation of scissile alpha- or beta-(1-4)-glycosidic bonds, yielding C4 oxidation products. Catalysis by LPMOs requires the reduction of the active-site copper from Cu(II) to Cu(I) by a reducing agent and H(2)O(2) or O(2) as a cosubstrate. The protein is AA9 family lytic polysaccharide monooxygenase J (gh61-10) of Neurospora crassa (strain ATCC 24698 / 74-OR23-1A / CBS 708.71 / DSM 1257 / FGSC 987).